The primary structure comprises 228 residues: Cytidylate kinase (228 aa).

17–25 (GPTASGKGT) is a binding site for ATP.

It belongs to the cytidylate kinase family. Type 1 subfamily.

The protein localises to the cytoplasm. It catalyses the reaction CMP + ATP = CDP + ADP. The enzyme catalyses dCMP + ATP = dCDP + ADP. The chain is Cytidylate kinase from Burkholderia mallei (strain NCTC 10247).